The primary structure comprises 111 residues: UPF0235 protein glr3835 (111 aa).

It belongs to the UPF0235 family.

In Gloeobacter violaceus (strain ATCC 29082 / PCC 7421), this protein is UPF0235 protein glr3835.